Consider the following 110-residue polypeptide: Nucleoid-associated protein Mkms_4993 (110 aa).

The protein belongs to the YbaB/EbfC family. Homodimer.

Its subcellular location is the cytoplasm. The protein resides in the nucleoid. In terms of biological role, binds to DNA and alters its conformation. May be involved in regulation of gene expression, nucleoid organization and DNA protection. This is Nucleoid-associated protein Mkms_4993 from Mycobacterium sp. (strain KMS).